The following is a 396-amino-acid chain: S-adenosylmethionine synthase (396 aa).

Histidine 16 serves as a coordination point for ATP. Aspartate 18 contacts Mg(2+). Residue glutamate 44 coordinates K(+). The L-methionine site is built by glutamate 57 and glutamine 100. The tract at residues 100 to 110 is flexible loop; that stretch reads QSQDIARGVDN. ATP-binding positions include 162–164, aspartate 237, 243–244, alanine 260, and lysine 264; these read DGK and RK. Aspartate 237 contributes to the L-methionine binding site. Lysine 268 is a binding site for L-methionine.

Belongs to the AdoMet synthase family. In terms of assembly, homotetramer; dimer of dimers. Mg(2+) serves as cofactor. It depends on K(+) as a cofactor.

It localises to the cytoplasm. It catalyses the reaction L-methionine + ATP + H2O = S-adenosyl-L-methionine + phosphate + diphosphate. Its pathway is amino-acid biosynthesis; S-adenosyl-L-methionine biosynthesis; S-adenosyl-L-methionine from L-methionine: step 1/1. Catalyzes the formation of S-adenosylmethionine (AdoMet) from methionine and ATP. The overall synthetic reaction is composed of two sequential steps, AdoMet formation and the subsequent tripolyphosphate hydrolysis which occurs prior to release of AdoMet from the enzyme. The sequence is that of S-adenosylmethionine synthase from Myxococcus xanthus.